The primary structure comprises 1229 residues: Putative cell division cycle ATPase (1229 aa).

A compositionally biased stretch (low complexity) spans 252 to 267 (GKKNNNGNVKKGIKNV). The tract at residues 252–315 (GKKNNNGNVK…GGKNNSYYNE (64 aa)) is disordered. The segment covering 268–281 (PMDEKSYSPNDHDN) has biased composition (basic and acidic residues). Residues 282–314 (NSNNSNNNNNNDNNNSNNNNNNNNGGKNNSYYN) show a composition bias toward low complexity. 568-575 (GIPGTGKT) lines the ATP pocket. Disordered regions lie at residues 814–837 (TLLQ…DALD) and 860–892 (FSND…KNER). Basic and acidic residues-rich tracts occupy residues 819-837 (DKNE…DALD) and 882-892 (NPNDKLDKNER). 975-982 (GPPGCGKT) lines the ATP pocket.

Belongs to the AAA ATPase family.

This is Putative cell division cycle ATPase from Plasmodium falciparum (isolate 3D7).